Reading from the N-terminus, the 480-residue chain is MMTEAERASKLAEPAANDTPTRGKGVFYVHTLGCQMNVHDSERIAGVLEADGYVPATEEQYLNHDIDLIVMNTCAVRENAAERMYGTIGLWAELKRERPNLQIAVGGCMAQLDREKIAKKAPWVDAVFGTKNIGSLPQLLDQARIEGHAQVKVQEELNYFPSQLPTDRASKVSSWVAISVGCNNTCTFCIVPTTRGKEHDRRPGDILAEIRQCVDEGAKEVTLLGQNVNSFGYGIGDRFAFSKLLRACGEIDGLERVRFTSPHPAAFTDDVIAAMAETPNVMHQLHFPLQSGSDRILRAMRRSYRSAKFLDILRKIREAMPDAQISTDIIVGFPGETEEDFQETLRVVEEARFASAFTFIYSPRPGTPAAEMEQVPHDVVQDRFERLVALQERITEENLKTFEGRDVEVMVTGASGKKDAATHRVTGREKTGVLVHVGVPEGEPMPQVGDFVTATVTHAGRHNLIADPNPEAGQTYAVRH.

Residues 25-145 enclose the MTTase N-terminal domain; it reads GVFYVHTLGC…LPQLLDQARI (121 aa). Positions 34, 74, 108, 182, 186, and 189 each coordinate [4Fe-4S] cluster. In terms of domain architecture, Radical SAM core spans 168–397; it reads RASKVSSWVA…VALQERITEE (230 aa). The TRAM domain maps to 400–470; that stretch reads KTFEGRDVEV…RHNLIADPNP (71 aa).

Belongs to the methylthiotransferase family. MiaB subfamily. In terms of assembly, monomer. It depends on [4Fe-4S] cluster as a cofactor.

The protein resides in the cytoplasm. The catalysed reaction is N(6)-dimethylallyladenosine(37) in tRNA + (sulfur carrier)-SH + AH2 + 2 S-adenosyl-L-methionine = 2-methylsulfanyl-N(6)-dimethylallyladenosine(37) in tRNA + (sulfur carrier)-H + 5'-deoxyadenosine + L-methionine + A + S-adenosyl-L-homocysteine + 2 H(+). Functionally, catalyzes the methylthiolation of N6-(dimethylallyl)adenosine (i(6)A), leading to the formation of 2-methylthio-N6-(dimethylallyl)adenosine (ms(2)i(6)A) at position 37 in tRNAs that read codons beginning with uridine. In Bifidobacterium adolescentis (strain ATCC 15703 / DSM 20083 / NCTC 11814 / E194a), this protein is tRNA-2-methylthio-N(6)-dimethylallyladenosine synthase.